Reading from the N-terminus, the 864-residue chain is Structure-specific endonuclease subunit SLX4 (864 aa).

Disordered stretches follow at residues 1 to 21 (MTTQSSSDGRMFTSSIIPVIP), 49 to 69 (LSTSTSRGPTRSDTVGDKTQG), 91 to 113 (TGTGGKAATGKRLKRRTESPGNA), 161 to 190 (ANQTVSRQPETKISAPKECNDTTQPAGNDH), 289 to 318 (LSDDRQSSITEDSESATSKPRRVKAKNRPK), 346 to 385 (TLLSDEPGKEKSAAKRTSGARCAKPGRKKSTTTEKKNEPP), 413 to 433 (ANGHSEDQHEQNEGTSHISNS), and 625 to 767 (KAPN…VTSS). Over residues 295 to 306 (SSITEDSESATS) the composition is skewed to polar residues. Over residues 307–318 (KPRRVKAKNRPK) the composition is skewed to basic residues. The span at 656–668 (QPNSISQKATTQV) shows a compositional bias: polar residues. The segment covering 685–695 (VSSRRSTSTSK) has biased composition (low complexity). Over residues 743–767 (PESFNLPTTPLTIRSGKVPSTVTSS) the composition is skewed to polar residues.

This sequence belongs to the SLX4 family. In terms of assembly, forms a heterodimer with SLX1. In terms of processing, phosphorylated in response to DNA damage.

The protein localises to the nucleus. Its function is as follows. Regulatory subunit of the SLX1-SLX4 structure-specific endonuclease that resolves DNA secondary structures generated during DNA repair and recombination. Has endonuclease activity towards branched DNA substrates, introducing single-strand cuts in duplex DNA close to junctions with ss-DNA. The chain is Structure-specific endonuclease subunit SLX4 from Paracoccidioides lutzii (strain ATCC MYA-826 / Pb01) (Paracoccidioides brasiliensis).